The chain runs to 122 residues: Large ribosomal subunit protein uL14c (122 aa).

Belongs to the universal ribosomal protein uL14 family. Part of the 50S ribosomal subunit.

Its subcellular location is the plastid. It is found in the chloroplast. Functionally, binds to 23S rRNA. The chain is Large ribosomal subunit protein uL14c from Cycas taitungensis (Prince sago).